The chain runs to 144 residues: L-fucose mutarotase (144 aa).

Histidine 22 acts as the Proton donor in catalysis. Substrate is bound by residues aspartate 30, arginine 109, and tyrosine 131–asparagine 133.

The protein belongs to the RbsD / FucU family. FucU mutarotase subfamily. In terms of assembly, homodecamer.

The protein localises to the cytoplasm. The catalysed reaction is alpha-L-fucose = beta-L-fucose. The protein operates within carbohydrate metabolism; L-fucose metabolism. Involved in the anomeric conversion of L-fucose. The chain is L-fucose mutarotase from Haemophilus influenzae (strain 86-028NP).